A 71-amino-acid chain; its full sequence is Large ribosomal subunit protein bL31 (71 aa).

4 residues coordinate Zn(2+): C16, C18, C36, and C39.

It belongs to the bacterial ribosomal protein bL31 family. Type A subfamily. In terms of assembly, part of the 50S ribosomal subunit. The cofactor is Zn(2+).

Binds the 23S rRNA. The chain is Large ribosomal subunit protein bL31 from Petrotoga mobilis (strain DSM 10674 / SJ95).